The following is a 244-amino-acid chain: Sperm-egg fusion protein Juno (244 aa).

A signal peptide spans 1 to 19 (MAQWWLILLGLWTVLPSLA). 8 cysteine pairs are disulfide-bonded: Cys-27–Cys-55, Cys-47–Cys-95, Cys-56–Cys-99, Cys-79–Cys-166, Cys-86–Cys-137, Cys-126–Cys-200, Cys-130–Cys-180, and Cys-143–Cys-160. The tract at residues 62–81 (WEAHLDEPLLFNFSMTHCGL) is important for interaction with IZUMO1. Asn-73 carries an N-linked (GlcNAc...) asparagine glycan. The propeptide occupies 223–244 (SASAPQLSYSITAFSLCLLLHA).

This sequence belongs to the folate receptor family. Monomer. Interacts with IZUMO1; the interaction is direct. IZUMO1 and IZUMO1R/JUNO form a complex with 1:1 stoichiometry. Interacts with FCRL3/MAIA; FCRL3/MAIA replaces IZUMO1R/JUNO as IZUMO1 receptor after sperm-egg adhesion, thereby permitting species-specific gamete fusion. Interacts with WDR54. Post-translationally, the protein is rapidly cleaved following fertilization, being only weakly detectable in zona-intact fertilized eggs at telophase II and undetectable at the pronuclear stage. Sheding is probably required to block to polyspermy and ensuring egg fusion with a single sperm. Expressed in the oocyte (at protein level).

Its subcellular location is the cell membrane. It localises to the cell projection. The protein resides in the microvillus membrane. In terms of biological role, receptor for IZUMO1 present at the cell surface of oocytes (oolemma), which is essential for species-specific gamete recognition and fertilization. The IZUMO1:IZUMO1R/JUNO interaction is a necessary adhesion event between sperm and egg that is required for fertilization but is not sufficient for cell fusion. The ligand-receptor interaction probably does not act as a membrane 'fusogen'. Does not bind folate. This is Sperm-egg fusion protein Juno (Izumo1r) from Rattus norvegicus (Rat).